A 527-amino-acid polypeptide reads, in one-letter code: Succinate-semialdehyde dehydrogenase, mitochondrial (527 aa).

The N-terminal 35 residues, 1 to 35, are a transit peptide targeting the mitochondrion; sequence MAMAMAMRRAAALGARHILAASSTSSSGVLLRRHM. NAD(+) is bound by residues Arg-208, 223-226, and 276-281; these read KPSE and GSTAVG. Arg-208 contacts substrate. Glu-298 functions as the Proton acceptor in the catalytic mechanism. 3 residues coordinate substrate: Arg-326, Cys-332, and Ser-489. Cys-332 (nucleophile) is an active-site residue. Cys-332 and Cys-334 form a disulfide bridge.

This sequence belongs to the aldehyde dehydrogenase family. Homotetramer.

It localises to the mitochondrion matrix. It carries out the reaction succinate semialdehyde + NAD(+) + H2O = succinate + NADH + 2 H(+). Its pathway is amino-acid degradation; 4-aminobutanoate degradation. Redox-regulated. Inhibited under oxydizing conditions. Functionally, oxidizes specifically succinate semialdehyde. Involved in plant response to environmental stress by preventing the accumulation of reactive oxygen species. In Oryza sativa subsp. japonica (Rice), this protein is Succinate-semialdehyde dehydrogenase, mitochondrial (ALDH5F1).